Here is a 421-residue protein sequence, read N- to C-terminus: MAAGFGRCCRVLRSISRFQWRSQHTKANRQREPGLGFSFEFTEQQKEFQATARKFAREEIIPVAAEYDKTGEYPVPLIRRAWELGLMNTHIPENCGGLGLGTFDACLISEELAYGCTGVQTAIEGNSLGQMPIIIAGNDQQKKKYLGRMTEEPLMCAYCVTEPGAGSDVAGIKTKAEKKGDEYIINGQKMWITNGGKANWYFLLARSDPDPKAPANKAFTGFIVEADTPGIQIGRKELNMGQRCSDTRGIVFEDVKVPRENVLIGDGAGFKVAMGAFDKTRPVVAAGAVGLAQRALDEATKYALERKTFGKLLVEHQAISFMLAEMAMKVELARMSYQRAAWEVDSGRRNTYYASIAKAFAGDIANQLATDAVQILGGNGFNTEYPVEKLMRDAKIYQIYEGTSQIQRLIVAREHIDKYKN.

Residues methionine 1–threonine 25 constitute a mitochondrion transit peptide. Lysine 69 is subject to N6-acetyllysine; alternate. Lysine 69 is modified (N6-succinyllysine; alternate). Position 158-167 (tyrosine 158–serine 167) interacts with FAD. Serine 167 lines the octanoyl-CoA pocket. Lysine 179 is subject to N6-succinyllysine. An FAD-binding site is contributed by tryptophan 191–threonine 193. Residues lysine 212, lysine 217, and lysine 271 each carry the N6-acetyllysine; alternate modification. 3 positions are modified to N6-succinyllysine; alternate: lysine 212, lysine 217, and lysine 271. An octanoyl-CoA-binding site is contributed by aspartate 278. Lysine 279 carries the post-translational modification N6-acetyllysine. Residue arginine 281 participates in octanoyl-CoA binding. At lysine 301 the chain carries N6-acetyllysine. Residues arginine 306–threonine 308 and histidine 316–glutamine 317 contribute to the FAD site. The octanoyl-CoA site is built by arginine 349 and threonine 351. Phosphothreonine is present on threonine 351. Glutamine 374–glycine 378 contacts FAD. Position 401 (glutamate 401) interacts with octanoyl-CoA. Glutamate 401 acts as the Proton acceptor in catalysis. Glycine 402–glutamine 405 is a binding site for FAD.

It belongs to the acyl-CoA dehydrogenase family. As to quaternary structure, homotetramer. Interacts with the heterodimeric electron transfer flavoprotein ETF. It depends on FAD as a cofactor. Acetylated. Could occur at proximity of the cofactor-binding sites and reduce the catalytic activity. Could be deacetylated by SIRT3.

It is found in the mitochondrion matrix. It carries out the reaction a medium-chain 2,3-saturated fatty acyl-CoA + oxidized [electron-transfer flavoprotein] + H(+) = a medium-chain (2E)-enoyl-CoA + reduced [electron-transfer flavoprotein]. The catalysed reaction is pentanoyl-CoA + oxidized [electron-transfer flavoprotein] + H(+) = (2E)-pentenoyl-CoA + reduced [electron-transfer flavoprotein]. The enzyme catalyses hexanoyl-CoA + oxidized [electron-transfer flavoprotein] + H(+) = (2E)-hexenoyl-CoA + reduced [electron-transfer flavoprotein]. It catalyses the reaction octanoyl-CoA + oxidized [electron-transfer flavoprotein] + H(+) = (2E)-octenoyl-CoA + reduced [electron-transfer flavoprotein]. It carries out the reaction decanoyl-CoA + oxidized [electron-transfer flavoprotein] + H(+) = (2E)-decenoyl-CoA + reduced [electron-transfer flavoprotein]. The catalysed reaction is dodecanoyl-CoA + oxidized [electron-transfer flavoprotein] + H(+) = (2E)-dodecenoyl-CoA + reduced [electron-transfer flavoprotein]. The enzyme catalyses tetradecanoyl-CoA + oxidized [electron-transfer flavoprotein] + H(+) = (2E)-tetradecenoyl-CoA + reduced [electron-transfer flavoprotein]. It catalyses the reaction oxidized [electron-transfer flavoprotein] + hexadecanoyl-CoA + H(+) = (2E)-hexadecenoyl-CoA + reduced [electron-transfer flavoprotein]. The protein operates within lipid metabolism; mitochondrial fatty acid beta-oxidation. Its function is as follows. Medium-chain specific acyl-CoA dehydrogenase is one of the acyl-CoA dehydrogenases that catalyze the first step of mitochondrial fatty acid beta-oxidation, an aerobic process breaking down fatty acids into acetyl-CoA and allowing the production of energy from fats. The first step of fatty acid beta-oxidation consists in the removal of one hydrogen from C-2 and C-3 of the straight-chain fatty acyl-CoA thioester, resulting in the formation of trans-2-enoyl-CoA. Electron transfer flavoprotein (ETF) is the electron acceptor that transfers electrons to the main mitochondrial respiratory chain via ETF-ubiquinone oxidoreductase (ETF dehydrogenase). Among the different mitochondrial acyl-CoA dehydrogenases, medium-chain specific acyl-CoA dehydrogenase acts specifically on acyl-CoAs with saturated 6 to 12 carbons long primary chains. This is Medium-chain specific acyl-CoA dehydrogenase, mitochondrial from Pan troglodytes (Chimpanzee).